The chain runs to 69 residues: DNA gyrase inhibitor YacG (69 aa).

Positions 7, 10, 26, and 30 each coordinate Zn(2+).

It belongs to the DNA gyrase inhibitor YacG family. As to quaternary structure, interacts with GyrB. The cofactor is Zn(2+).

Its function is as follows. Inhibits all the catalytic activities of DNA gyrase by preventing its interaction with DNA. Acts by binding directly to the C-terminal domain of GyrB, which probably disrupts DNA binding by the gyrase. In Shewanella sp. (strain ANA-3), this protein is DNA gyrase inhibitor YacG.